The primary structure comprises 181 residues: NAD(P)H-quinone oxidoreductase subunit I, chloroplastic (181 aa).

2 consecutive 4Fe-4S ferredoxin-type domains span residues 52–81 and 92–121; these read GRIH…VDWE and KSYS…MTEE. Residues Cys-61, Cys-64, Cys-67, Cys-71, Cys-101, Cys-104, Cys-107, and Cys-111 each coordinate [4Fe-4S] cluster.

The protein belongs to the complex I 23 kDa subunit family. As to quaternary structure, NDH is composed of at least 16 different subunits, 5 of which are encoded in the nucleus. It depends on [4Fe-4S] cluster as a cofactor.

Its subcellular location is the plastid. It localises to the chloroplast thylakoid membrane. It catalyses the reaction a plastoquinone + NADH + (n+1) H(+)(in) = a plastoquinol + NAD(+) + n H(+)(out). The enzyme catalyses a plastoquinone + NADPH + (n+1) H(+)(in) = a plastoquinol + NADP(+) + n H(+)(out). Its function is as follows. NDH shuttles electrons from NAD(P)H:plastoquinone, via FMN and iron-sulfur (Fe-S) centers, to quinones in the photosynthetic chain and possibly in a chloroplast respiratory chain. The immediate electron acceptor for the enzyme in this species is believed to be plastoquinone. Couples the redox reaction to proton translocation, and thus conserves the redox energy in a proton gradient. This chain is NAD(P)H-quinone oxidoreductase subunit I, chloroplastic, found in Zygnema circumcarinatum (Green alga).